Reading from the N-terminus, the 452-residue chain is Putrescine hydroxycinnamoyltransferase (452 aa).

H151 acts as the Proton acceptor in catalysis. The segment at 213–234 is disordered; sequence PAAGVDGDVGGDHKQQHGHGGE. Residues 222–234 show a composition bias toward basic and acidic residues; it reads GGDHKQQHGHGGE. The active-site Proton acceptor is the D398.

It belongs to the plant acyltransferase family. In terms of tissue distribution, highly expressed in roots. Expressed at low levels in flowers.

In terms of biological role, hydroxycinnamoyl transferase that catalyzes the transfer of an acyl from p-coumaryol-CoA to putrescine, to produce coumaroyl putrescine. Can use feruloyl-CoA, caffeoyl-CoA and sinapoyl-CoA as acyl donors. Seems to be able to transfer the acyl group from feruloyl-CoA to the acyl acceptors agmatine and spermidine. In Oryza sativa subsp. japonica (Rice), this protein is Putrescine hydroxycinnamoyltransferase.